Reading from the N-terminus, the 97-residue chain is Serine protease inhibitor Kazal-type 13 (97 aa).

Positions 1-26 (MTRRGCWPHRIIFSLILLTWTHVTLA) are cleaved as a signal peptide. The 62-residue stretch at 36-97 (NWPKPPCKMY…IEFVKYGKCE (62 aa)) folds into the Kazal-like domain. Cystine bridges form between Cys42–Cys78, Cys56–Cys75, and Cys64–Cys96.

As to expression, restricted to the epididymis, with highest levels in the initial segment, including epithelial cells, lumen, and sperm (at protein level). Localizes to the sperm heads, where it is restricted to the acrosomal region in epididymal spermatozoa, but not in testicular spermatozoa (at protein level).

The protein resides in the secreted. May be a serine protease inhibitor. Essential for sperm maturation and fertility. Inhibits sperm acrosome reaction, protecting sperm from premature reaction. The sequence is that of Serine protease inhibitor Kazal-type 13 (Spink13) from Rattus norvegicus (Rat).